The chain runs to 502 residues: Hexokinase-4 (502 aa).

The chain crosses the membrane as a helical span at residues 4-24 (VLVMLTAAAAVVACSVATVMV). In terms of domain architecture, Hexokinase spans 35 to 491 (RRVVGLLKDL…SSIGSALLLA (457 aa)). The interval 90 to 228 (NGSETGTYYA…GLDIRVAALV (139 aa)) is hexokinase small subdomain. ADP is bound by residues Gly104 and Ser105. Thr194, Lys195, Asn229, and Asp230 together coordinate D-glucose. Positions 229–480 (NDTVGALSFG…QHVVVKAMED (252 aa)) are hexokinase large subdomain. Thr253 contacts ADP. Residues Asn256, Glu284, and Glu315 each contribute to the D-glucose site. Gly445 is a binding site for ADP.

Belongs to the hexokinase family.

The protein localises to the mitochondrion outer membrane. The catalysed reaction is a D-hexose + ATP = a D-hexose 6-phosphate + ADP + H(+). It carries out the reaction D-fructose + ATP = D-fructose 6-phosphate + ADP + H(+). The enzyme catalyses D-glucose + ATP = D-glucose 6-phosphate + ADP + H(+). The protein operates within carbohydrate metabolism; hexose metabolism. It participates in carbohydrate degradation; glycolysis; D-glyceraldehyde 3-phosphate and glycerone phosphate from D-glucose: step 1/4. In terms of biological role, fructose and glucose phosphorylating enzyme. May be involved in the phosphorylation of glucose during the export from mitochondrion to cytosol. The chain is Hexokinase-4 from Arabidopsis thaliana (Mouse-ear cress).